The sequence spans 219 residues: Vacuolar iron transporter homolog 2.1 (219 aa).

Polar residues predominate over residues methionine 1–asparagine 15. The disordered stretch occupies residues methionine 1–glutamate 26. Threonine 2 is modified (N-acetylthreonine). At threonine 2–arginine 37 the chain is on the cytoplasmic side. The chain crosses the membrane as a helical span at residues alanine 38–glycine 58. Residues serine 59–methionine 67 lie on the Vacuolar side of the membrane. Residues leucine 68–valine 88 traverse the membrane as a helical segment. Residues serine 89 to alanine 133 are Cytoplasmic-facing. A helical membrane pass occupies residues isoleucine 134–isoleucine 154. At glutamate 155–methionine 161 the chain is on the vacuolar side. A helical membrane pass occupies residues valine 162 to leucine 182. Over glycine 183–arginine 193 the chain is Cytoplasmic. A helical membrane pass occupies residues valine 194 to serine 214. At alanine 215–isoleucine 219 the chain is on the vacuolar side.

It belongs to the CCC1 family. Highly expressed in roots. inflorescences and at lower levels in leaves.

The protein localises to the vacuole membrane. The catalysed reaction is Fe(2+)(in) = Fe(2+)(out). In terms of biological role, vacuolar iron transporter involved in the transfer of iron ions from the cytosol to the vacuole for intracellular iron storage. Involved in regulation of cellular iron homeostasis. Vacuolar iron storage is required for seed embryo and seedling development. The protein is Vacuolar iron transporter homolog 2.1 of Arabidopsis thaliana (Mouse-ear cress).